The following is a 62-amino-acid chain: Alpha-conotoxin-like Qc1.2 (62 aa).

The N-terminal stretch at 1-21 is a signal peptide; the sequence is MGMRMMFTVFLLVALATTVAS. Positions 22–48 are excised as a propeptide; sequence FTLDRASNGRNAAADDKPSDWIALAIK. Gln49 carries the post-translational modification Pyrrolidone carboxylic acid. Cystine bridges form between Cys50–Cys56 and Cys51–Cys61.

Belongs to the conotoxin A superfamily. In terms of tissue distribution, expressed by the venom duct.

It is found in the secreted. Functionally, alpha-conotoxins bind to the nicotinic acetylcholine receptors (nAChR) and inhibit them. This synthetic peptide (10 uM) selectively, but weakly inhibits both rat neuronal alpha-3-beta-2/CHRNA3-CHRNB2 (63%) and alpha-3-beta-4/CHRNA3-CHRNB4 (37%) subtypes of nAChR. This is Alpha-conotoxin-like Qc1.2 from Conus quercinus (Oak cone).